A 465-amino-acid chain; its full sequence is Ribulose bisphosphate carboxylase large chain (465 aa).

N6,N6,N6-trimethyllysine is present on Lys-4. Substrate is bound by residues Asn-113 and Thr-163. The active-site Proton acceptor is Lys-165. Substrate is bound at residue Lys-167. Mg(2+) is bound by residues Lys-191, Asp-193, and Glu-194. Lys-191 is modified (N6-carboxylysine). His-284 functions as the Proton acceptor in the catalytic mechanism. Residues Arg-285, His-317, and Ser-369 each coordinate substrate.

It belongs to the RuBisCO large chain family. Type I subfamily. In terms of assembly, heterohexadecamer of 8 large chains and 8 small chains; disulfide-linked. The disulfide link is formed within the large subunit homodimers. It depends on Mg(2+) as a cofactor. The disulfide bond which can form in the large chain dimeric partners within the hexadecamer appears to be associated with oxidative stress and protein turnover.

It is found in the plastid. The protein resides in the chloroplast. It carries out the reaction 2 (2R)-3-phosphoglycerate + 2 H(+) = D-ribulose 1,5-bisphosphate + CO2 + H2O. It catalyses the reaction D-ribulose 1,5-bisphosphate + O2 = 2-phosphoglycolate + (2R)-3-phosphoglycerate + 2 H(+). In terms of biological role, ruBisCO catalyzes two reactions: the carboxylation of D-ribulose 1,5-bisphosphate, the primary event in carbon dioxide fixation, as well as the oxidative fragmentation of the pentose substrate in the photorespiration process. Both reactions occur simultaneously and in competition at the same active site. This is Ribulose bisphosphate carboxylase large chain from Platytheca verticillata.